Consider the following 436-residue polypeptide: Probable G-protein coupled receptor C06G4.5 (436 aa).

At 1 to 53 (MSTNLVDYVDDSYLNQSMNSENGLDSVTQIMYDMKKYNIVNDVLPPPNHEDLH) the chain is on the extracellular side. Residue Asn-15 is glycosylated (N-linked (GlcNAc...) asparagine). A helical membrane pass occupies residues 54–74 (VVIMAVSYLLLFLLGTCGNVA). Residues 75–94 (VLTTIYHVIRSSRATLDNTL) lie on the Cytoplasmic side of the membrane. Residues 95–115 (IYVIVLSCVDFGVCLSLPITV) traverse the membrane as a helical segment. Over 116–132 (IDQILGFWMFGKIPCKL) the chain is Extracellular. Residues 133-153 (HAVFENFGKILSALILTAMSF) traverse the membrane as a helical segment. Topologically, residues 154–171 (DRYAGVCHPQRKRLRSRN) are cytoplasmic. Residues 172–192 (FAITILLVLAVYAFITLCPLL) form a helical membrane-spanning segment. At 193–230 (WSFTAREIILYAKETAPGMLTRMKIEKCTVDIDSQMFT) the chain is on the extracellular side. A helical membrane pass occupies residues 231 to 251 (AFTIYQFILCYCTPLVLIAFF). Residues 252–281 (YTKLLSKLREHTRTFKSSQIPFLHISLYTL) lie on the Cytoplasmic side of the membrane. Residues 282 to 302 (AVACFYFLCWTPFWMATLFAV) form a helical membrane-spanning segment. Residues 303 to 316 (YLENSANSSSVPPV) are Extracellular-facing. Asn-309 carries N-linked (GlcNAc...) asparagine glycosylation. Residues 317-337 (FVYIMYFIHALPFTNSAINWI) form a helical membrane-spanning segment. At 338 to 436 (LYGALNGQLQ…LLSNHNPTFL (99 aa)) the chain is on the cytoplasmic side.

The protein belongs to the G-protein coupled receptor 1 family.

It is found in the cell membrane. Functionally, putative receptor. The protein is Probable G-protein coupled receptor C06G4.5 of Caenorhabditis elegans.